The following is a 734-amino-acid chain: Photosystem I P700 chlorophyll a apoprotein A2 (734 aa).

8 helical membrane-spanning segments follow: residues 46 to 69 (IFASHFGQLAIIFLWTSGNLFHVA), 135 to 158 (LYIGALFLLITASMTLFAGWLHLQ), 175 to 199 (LNHHLSGLFGVSSLAWTGHLIHVAI), 273 to 291 (IAHHHLAIAVLFIVAGHMY), 330 to 353 (LHFQLGLALASLGVITSVVAQHMY), 369 to 395 (AALYTHHQYIAGFIMTGAFAHGAIFFI), 417 to 439 (AIISHLSWASLFLGFHTLGLYVH), and 517 to 535 (FLVHHAIALGLHTTTLILV). The [4Fe-4S] cluster site is built by Cys559 and Cys568. 2 helical membrane passes run 575–596 (AFYLAVFWMLNTIGWVTFYWHW) and 643–665 (LSVWAWMFLFGHLIWATGFMFLI). Chlorophyll a is bound by residues His654, Met662, and Tyr670. Trp671 provides a ligand contact to phylloquinone. Residues 707–727 (VVGLAHFSVGYVFTYAAFLIA) form a helical membrane-spanning segment.

Belongs to the PsaA/PsaB family. As to quaternary structure, the PsaA/B heterodimer binds the P700 chlorophyll special pair and subsequent electron acceptors. PSI consists of a core antenna complex that captures photons, and an electron transfer chain that converts photonic excitation into a charge separation. The eukaryotic PSI reaction center is composed of at least 11 subunits. The cofactor is P700 is a chlorophyll a/chlorophyll a' dimer, A0 is one or more chlorophyll a, A1 is one or both phylloquinones and FX is a shared 4Fe-4S iron-sulfur center..

The protein resides in the plastid. The protein localises to the chloroplast thylakoid membrane. It catalyses the reaction reduced [plastocyanin] + hnu + oxidized [2Fe-2S]-[ferredoxin] = oxidized [plastocyanin] + reduced [2Fe-2S]-[ferredoxin]. PsaA and PsaB bind P700, the primary electron donor of photosystem I (PSI), as well as the electron acceptors A0, A1 and FX. PSI is a plastocyanin-ferredoxin oxidoreductase, converting photonic excitation into a charge separation, which transfers an electron from the donor P700 chlorophyll pair to the spectroscopically characterized acceptors A0, A1, FX, FA and FB in turn. Oxidized P700 is reduced on the lumenal side of the thylakoid membrane by plastocyanin. The protein is Photosystem I P700 chlorophyll a apoprotein A2 of Mesostigma viride (Green alga).